Here is a 216-residue protein sequence, read N- to C-terminus: MKDYSNYHKVNINNKLLHDGKLIFQQGLKGFESEKVTIDGIEKTVMITSKYSSGDGSARYILGEIADIYRGGVVKFNDETWLITSHPLSNKIYKKAEIKICGTSFFLTSEDKLIDTGKINEITGKPIYEKVPGEKTEVPCIFERTTSINGTELAVNLPDGQANITIPYLVHEKLKIGLTLTFFGEDYQVDDIDYSKVYGDHGTIKLVAKKKVGEKT.

In Bacillus subtilis (strain 168), this protein is SPbeta prophage-derived uncharacterized protein YomX (yomX).